A 190-amino-acid chain; its full sequence is Dynein axonemal light chain 1 (190 aa).

Alanine 2 is modified (N-acetylalanine). LRR repeat units follow at residues 49-70, 71-92, 94-115, and 116-137; these read NCEK…NGLK, NLRI…EAVG, TLEE…HVMK, and KLKI…LKLA. The residue at position 56 (serine 56) is a Phosphoserine. Residues 150 to 190 enclose the LRRCT domain; the sequence is NPLEEKHSAEGNWIDEATKRVPKLKKLDGTPVIKEDEEEES.

Belongs to the dynein light chain LC1-type family. In terms of assembly, interacts with ZMYND10 (via C-terminus). Interacts with DNAH5, a outer arm dynein heavy chain. Interacts with tubulin located within the A-tubule of the outer doublets in a ATP-independent manner. Expressed in the respiratory epithelium of the upper airways and the ependymal cells lining the brain ventricles.

The protein resides in the cytoplasm. The protein localises to the cytoskeleton. It localises to the cilium axoneme. In terms of biological role, part of the multisubunit axonemal ATPase complexes that generate the force for cilia motility and govern beat frequency. Component of the outer arm dynein (ODA). May be involved in a mechanosensory feedback mechanism controlling ODA activity based on external conformational cues by tethering the outer arm dynein heavy chain (DNAH5) to the microtubule within the axoneme. Important for ciliary function in the airways and for the function of the cilia that produce the nodal flow essential for the determination of the left-right asymmetry. The sequence is that of Dynein axonemal light chain 1 (Dnal1) from Mus musculus (Mouse).